The chain runs to 208 residues: Thymidylate kinase (208 aa).

Gly-11 to Ser-18 serves as a coordination point for ATP.

It belongs to the thymidylate kinase family.

It carries out the reaction dTMP + ATP = dTDP + ADP. Phosphorylation of dTMP to form dTDP in both de novo and salvage pathways of dTTP synthesis. In Methylococcus capsulatus (strain ATCC 33009 / NCIMB 11132 / Bath), this protein is Thymidylate kinase.